Consider the following 338-residue polypeptide: GTPase Obg (338 aa).

In terms of domain architecture, Obg spans 1–159; that stretch reads MSFIDEVKIH…RWLRLELKLM (159 aa). Residues 160 to 331 form the OBG-type G domain; sequence ADVGLLGMPS…LLDEIARQLW (172 aa). Residues 166–173, 191–195, 213–216, 283–286, and 312–314 each bind GTP; these read GMPSVGKS, FTTLK, DIPG, NKMD, and SAA. The Mg(2+) site is built by Ser173 and Thr193.

This sequence belongs to the TRAFAC class OBG-HflX-like GTPase superfamily. OBG GTPase family. Monomer. Mg(2+) is required as a cofactor.

The protein localises to the cytoplasm. An essential GTPase which binds GTP, GDP and possibly (p)ppGpp with moderate affinity, with high nucleotide exchange rates and a fairly low GTP hydrolysis rate. Plays a role in control of the cell cycle, stress response, ribosome biogenesis and in those bacteria that undergo differentiation, in morphogenesis control. This Geotalea daltonii (strain DSM 22248 / JCM 15807 / FRC-32) (Geobacter daltonii) protein is GTPase Obg.